Reading from the N-terminus, the 310-residue chain is Methionyl-tRNA formyltransferase (310 aa).

110-113 (SLLP) contributes to the (6S)-5,6,7,8-tetrahydrofolate binding site.

It belongs to the Fmt family.

It catalyses the reaction L-methionyl-tRNA(fMet) + (6R)-10-formyltetrahydrofolate = N-formyl-L-methionyl-tRNA(fMet) + (6S)-5,6,7,8-tetrahydrofolate + H(+). Its function is as follows. Attaches a formyl group to the free amino group of methionyl-tRNA(fMet). The formyl group appears to play a dual role in the initiator identity of N-formylmethionyl-tRNA by promoting its recognition by IF2 and preventing the misappropriation of this tRNA by the elongation apparatus. The sequence is that of Methionyl-tRNA formyltransferase from Clostridium acetobutylicum (strain ATCC 824 / DSM 792 / JCM 1419 / IAM 19013 / LMG 5710 / NBRC 13948 / NRRL B-527 / VKM B-1787 / 2291 / W).